The chain runs to 214 residues: uncharacterized protein (214 aa).

2 consecutive transmembrane segments (helical) span residues 23-43 and 65-85; these read ILVG…VAAA and VLYA…PVLL. Residues 96 to 115 are disordered; it reads ATRPTGASVRGGRSIGSGHP. A run of 2 helical transmembrane segments spans residues 152–172 and 181–201; these read VVLT…TYLM and WISY…EWLY.

It localises to the cell membrane. This is an uncharacterized protein from Mycobacterium tuberculosis (strain CDC 1551 / Oshkosh).